The following is a 259-amino-acid chain: Adenylosuccinate synthetase (259 aa).

Residues 3–9 (GDEGKGK) and 31–33 (GHT) contribute to the GTP site. D4 (proton acceptor) is an active-site residue. Residues D4 and G31 each contribute to the Mg(2+) site. 4–7 (DEGK) is a binding site for IMP. The active-site Proton donor is H32. T120, R134, Q215, and T230 together coordinate IMP.

The protein belongs to the adenylosuccinate synthetase family. As to quaternary structure, homodimer. The cofactor is Mg(2+).

Its subcellular location is the cytoplasm. It catalyses the reaction IMP + L-aspartate + GTP = N(6)-(1,2-dicarboxyethyl)-AMP + GDP + phosphate + 2 H(+). It functions in the pathway purine metabolism; AMP biosynthesis via de novo pathway; AMP from IMP: step 1/2. In terms of biological role, plays an important role in the de novo pathway of purine nucleotide biosynthesis. Catalyzes the first committed step in the biosynthesis of AMP from IMP. The polypeptide is Adenylosuccinate synthetase (Aggregatibacter actinomycetemcomitans (Actinobacillus actinomycetemcomitans)).